The chain runs to 162 residues: RxLR effector protein PITG_06094 (162 aa).

Residues 1–20 (MRLSFILAATLTGLLACATA) form the signal peptide. The RxLR-dEER signature appears at 51 to 91 (RFLRAYNDAEDDSEDPKNVKNTVDAKPADESEDSELSEEER). Positions 56–88 (YNDAEDDSEDPKNVKNTVDAKPADESEDSELSE) are disordered.

The protein belongs to the RxLR effector family.

It localises to the secreted. Its subcellular location is the host cytoplasm. The protein resides in the host nucleus. The protein localises to the host nucleolus. In terms of biological role, effector that enhances P.infestans colonization of Nicotiana benthamiana leaves. This chain is RxLR effector protein PITG_06094, found in Phytophthora infestans (strain T30-4) (Potato late blight agent).